Reading from the N-terminus, the 526-residue chain is Cyclin-L1 (526 aa).

A disordered region spans residues 1-36; the sequence is MASGPHSTATAAAAASSAAPSAGGSSSGTTTTTTTT. Cyclin-like stretches follow at residues 88–190 and 203–287; these read ELIQ…RVLK and KIIV…ETLR. Residues 318 to 526 form a disordered region; sequence KGLNPDGTPA…SRSGHGRHRR (209 aa). At threonine 325 the chain carries Phosphothreonine. 2 positions are modified to phosphoserine: serine 335 and serine 338. Residues lysine 339 and lysine 347 each participate in a glycyl lysine isopeptide (Lys-Gly) (interchain with G-Cter in SUMO2) cross-link. A compositionally biased stretch (basic and acidic residues) spans 342–352; it reads SPREVKAEEKS. Residues serine 352 and serine 355 each carry the phosphoserine modification. A compositionally biased stretch (basic and acidic residues) spans 361 to 370; the sequence is VKKEPEDRQQ. Residue lysine 362 forms a Glycyl lysine isopeptide (Lys-Gly) (interchain with G-Cter in SUMO2) linkage. A Phosphoserine modification is found at serine 374. Composition is skewed to basic residues over residues 382-418, 438-452, 460-476, and 486-498; these read DSKR…RRSR, RRHH…KAKH, SNRH…RSQS, and KKHR…HRDR. The RS stretch occupies residues 390-432; the sequence is RSASRSRSRTRSRSRSHTPRRHYNNRRSRSGTYSSRSRSRSRS. A Phosphoserine modification is found at serine 445. Residues 499-508 show a composition bias toward basic and acidic residues; that stretch reads RERSRSFERS. Residues 509–526 show a composition bias toward basic residues; the sequence is HKSKHHGGSRSGHGRHRR.

It belongs to the cyclin family. Cyclin L subfamily. (Microbial infection) Interacts with human herpes virus 1 (HHV-1) transcriptional regulator ICP22. In terms of assembly, interacts with POLR2A via its hyperphosphorylated C-terminal domain (CTD). Interacts with CDK11A, CDK12 and CDK13. Isoforms 1 and 2, but not isoform 3, interact with CDK11B. May form a ternary complex with CDK11B and casein kinase II (CKII). Interacts with pre-mRNA-splicing factors, including at least SRSF1, SRSF2 and SRSF7/SLU7. In terms of tissue distribution, widely expressed. Overexpression in primary tumors of head and neck squamous cell carcinomas (HNSCC).

It is found in the nucleus speckle. The protein resides in the nucleus. Its subcellular location is the nucleoplasm. In terms of biological role, involved in pre-mRNA splicing. Functions in association with cyclin-dependent kinases (CDKs). Inhibited by the CDK-specific inhibitor CDKN1A/p21. May play a role in the regulation of RNA polymerase II (pol II). May be a candidate proto-oncogene in head and neck squamous cell carcinomas (HNSCC). The polypeptide is Cyclin-L1 (CCNL1) (Homo sapiens (Human)).